Consider the following 362-residue polypeptide: Cyclic di-GMP phosphodiesterase PdeL (362 aa).

Residues 18–83 (HLSLPGSVSE…TFWRDIFFQY (66 aa)) enclose the HTH luxR-type domain. A DNA-binding region (H-T-H motif) is located at residues 42–61 (VTEISQYRNRSAKTISHQKK). One can recognise an EAL domain in the interval 106–360 (HIVTPEAISL…KFISEWVMKA (255 aa)). Glutamine 127 contributes to the substrate binding site. Position 141 (glutamate 141) interacts with Mg(2+). Substrate is bound by residues 144-145 (VR) and asparagine 200. Mg(2+) is bound by residues asparagine 200, glutamate 232, and aspartate 262. Substrate-binding positions include aspartate 262, lysine 286, 319 to 322 (EGVE), and tyrosine 341.

In terms of assembly, is in a fast thermodynamic monomer-homodimer equilibrium. Dimerization is required for PDE activity. Dimerization affinity is increased about 100-fold upon substrate binding. The cofactor is Mg(2+). Mn(2+) serves as cofactor.

The catalysed reaction is 3',3'-c-di-GMP + H2O = 5'-phosphoguanylyl(3'-&gt;5')guanosine + H(+). Its activity is regulated as follows. Strongly inhibited by Ca(2+). Functionally, acts both as an enzyme and as a c-di-GMP sensor to couple transcriptional activity to the c-di-GMP status of the cell. Phosphodiesterase (PDE) that catalyzes the hydrolysis of cyclic-di-GMP (c-di-GMP) to 5'-pGpG. Also acts as a transcription factor to control its own expression. The polypeptide is Cyclic di-GMP phosphodiesterase PdeL (Escherichia coli (strain K12)).